Consider the following 149-residue polypeptide: Arginine repressor (149 aa).

This sequence belongs to the ArgR family.

It is found in the cytoplasm. Its pathway is amino-acid biosynthesis; L-arginine biosynthesis [regulation]. In terms of biological role, regulates arginine biosynthesis genes. In Alkaliphilus metalliredigens (strain QYMF), this protein is Arginine repressor.